An 841-amino-acid chain; its full sequence is MIDYASSASLSRMLYGEDLIDWIIKNRPGITTERQSDGPVTFPSPLYPRTRNVLIVRAPMGSGKTTALMNWLQCILCNSNMSVLIVSCRRSFTNTLSEKINRAGMSGFCTYLSSSDYIMRGREFSRLLVQIESLHRVDSKLLDNYDIVILDEIMSTIGQLFSPTMKHLCQVDNILTSLLRYRPKIVAMDATINTQLIDMLAIMRGEENIHVIVGEYAASGFSRRSCTILRSLGTNILLSVMNEFKQLPSHTQPIFKQSTGVNGSLDISLHDRTFFSELTRRLEGGLNICLFSSTISFSEIVARFCLAYTDSVLVLNSTRNTPIDINSWSNYRVVIYTTVVTVGLSFNDSHFHSMFAYIKPTINGPEMVSVYQSLGRIRSLRLNEVLIYIDASGAGSEPVFTPMLLNHVIANGGGWPTRFSQVTNMLCHNFRRDCIPTFRAADALYIFPRFKYKHLFERCTLNNVSDSINILHALLESNLIHVRFDGCDLQLNAEAFCDFLVILRADSITAQRDMKTLRKNATCPLPVEVDVIDSDAVACFVQKYLRPTVLANDLTELLTKLAEPITREQFINITMLEACRATPAALYSEAVFCRIYDYYASGNIPIIGPSGTLDTTILTCDFNTSGRWDLYRVCCKWAELLGINPLEGPNADIDPTKLLHVMKDDYDIYARSVLEIARCYLIDAQTALKRPVRATKCALSGIQNSHHSQPSTQSHAVSLFKVTWEILFGLRLTKSTTTFPGRTKVKNLRKAEIEALLDGAGIDRTSCKTHKDLYTLLMKSKSLFRNMRYDIRRPKWYDLLRSRLDKELGIYHDLVDLESVLAEIPSALWPRVEGAVDFHRL.

One can recognise a Helicase ATP-binding domain in the interval 45–210 (PLYPRTRNVL…AIMRGEENIH (166 aa)). 58–65 (APMGSGKT) is a binding site for ATP.

This sequence belongs to the herpesviridae OriBP family. Homodimer. Interacts with the major DNA-binding protein. Interacts with the DNA helicase/primase complex-associated protein and the polymerase accessory protein.

It localises to the host nucleus. Functionally, functions as a docking protein to recruit essential components of the viral replication machinery to viral DNA origins. In the presence of the major DNA-binding protein, opens dsDNA leading to a conformational change in the origin that facilitates DNA unwinding and subsequent replication. This chain is Replication origin-binding protein (MDV021), found in Gallid herpesvirus 2 (strain Chicken/Md5/ATCC VR-987) (GaHV-2).